Reading from the N-terminus, the 98-residue chain is Conotoxin Di19A (98 aa).

Positions 1–19 (MSTLGILLPIALLLPLANP) are cleaved as a signal peptide. A propeptide spanning residues 20-49 (AENGDGQAMPRTRNLRSLSFGRTLRRLEKR) is cleaved from the precursor. P53 carries the 4-hydroxyproline modification. E63 is subject to 4-carboxyglutamate. 4-hydroxyproline is present on residues P68, P93, and P97.

Contains 5 disulfide bonds. Expressed by the venom duct.

It is found in the secreted. Its function is as follows. Injection of the synthetic peptide causes a hyperexcitable phenotype in mice greater than three weeks of age at lower doses, and lethargy at higher doses. This Conus distans (Distant cone) protein is Conotoxin Di19A.